The chain runs to 810 residues: Lon protease (810 aa).

Residues 8–201 (LPLLPLRGIL…KLCGIVAKEL (194 aa)) form the Lon N-terminal domain. Position 353-360 (353-360 (GPPGVGKT)) interacts with ATP. In terms of domain architecture, Lon proteolytic spans 589 to 770 (NDEVGTVTGM…DQVLAIALLE (182 aa)). Residues serine 676 and lysine 719 contribute to the active site.

It belongs to the peptidase S16 family. Homohexamer. Organized in a ring with a central cavity.

It localises to the cytoplasm. It catalyses the reaction Hydrolysis of proteins in presence of ATP.. In terms of biological role, ATP-dependent serine protease that mediates the selective degradation of mutant and abnormal proteins as well as certain short-lived regulatory proteins. Required for cellular homeostasis and for survival from DNA damage and developmental changes induced by stress. Degrades polypeptides processively to yield small peptide fragments that are 5 to 10 amino acids long. Binds to DNA in a double-stranded, site-specific manner. The protein is Lon protease of Desulforamulus reducens (strain ATCC BAA-1160 / DSM 100696 / MI-1) (Desulfotomaculum reducens).